The following is a 179-amino-acid chain: MAELATIARPYAEALFRVAEGGDIAAWSTLVQELAQVARLPEVLSVASSPKVTRTQVVELLLAAVKSPVAAGAEAKNFVQMLVDNHRIALLPEIAEQFEALKNEREGAADAEIVSAFPLNGADLESLVSGLERKFKRKLKPTVEVDSSLIGGVRVTVGDEVLDTSVRARLASMQAALTA.

It belongs to the ATPase delta chain family. F-type ATPases have 2 components, F(1) - the catalytic core - and F(0) - the membrane proton channel. F(1) has five subunits: alpha(3), beta(3), gamma(1), delta(1), epsilon(1). F(0) has three main subunits: a(1), b(2) and c(10-14). The alpha and beta chains form an alternating ring which encloses part of the gamma chain. F(1) is attached to F(0) by a central stalk formed by the gamma and epsilon chains, while a peripheral stalk is formed by the delta and b chains.

The protein localises to the cell inner membrane. In terms of biological role, f(1)F(0) ATP synthase produces ATP from ADP in the presence of a proton or sodium gradient. F-type ATPases consist of two structural domains, F(1) containing the extramembraneous catalytic core and F(0) containing the membrane proton channel, linked together by a central stalk and a peripheral stalk. During catalysis, ATP synthesis in the catalytic domain of F(1) is coupled via a rotary mechanism of the central stalk subunits to proton translocation. This protein is part of the stalk that links CF(0) to CF(1). It either transmits conformational changes from CF(0) to CF(1) or is implicated in proton conduction. This is ATP synthase subunit delta from Burkholderia ambifaria (strain ATCC BAA-244 / DSM 16087 / CCUG 44356 / LMG 19182 / AMMD) (Burkholderia cepacia (strain AMMD)).